The following is a 1046-amino-acid chain: Inner tegument protein (1046 aa).

The segment at 543–1046 (WGIVPPDESN…TGRRANGDNA (504 aa)) is interaction with large tegument protein.

The protein belongs to the herpesviridae inner tegument protein family. Interacts (via C-terminus) with the large tegument protein/LTP (via N-terminus).

Its subcellular location is the virion tegument. It is found in the host cytoplasm. The protein resides in the host nucleus. The protein localises to the host Golgi apparatus. It localises to the host trans-Golgi network. Its function is as follows. Plays an essential role in cytoplasmic secondary envelopment during viral egress. Interacts with the capsid via the large tegument protein/LTP and participates in its transport to the host trans-Golgi network (TGN) where secondary envelopment occurs. Modulates tegumentation and capsid accumulation at the viral assembly complex. This chain is Inner tegument protein (MDV050), found in Gallid herpesvirus 2 (strain Chicken/Md5/ATCC VR-987) (GaHV-2).